The primary structure comprises 447 residues: Trigger factor (447 aa).

The 86-residue stretch at 164-249 folds into the PPIase FKBP-type domain; the sequence is GNQVTFDFEG…VKLVEKSKLP (86 aa).

The protein belongs to the FKBP-type PPIase family. Tig subfamily.

It is found in the cytoplasm. The enzyme catalyses [protein]-peptidylproline (omega=180) = [protein]-peptidylproline (omega=0). Functionally, involved in protein export. Acts as a chaperone by maintaining the newly synthesized protein in an open conformation. Functions as a peptidyl-prolyl cis-trans isomerase. This Psychrobacter arcticus (strain DSM 17307 / VKM B-2377 / 273-4) protein is Trigger factor.